The chain runs to 365 residues: Flagellar P-ring protein (365 aa).

Positions 1-21 (MIKRIISIVFLLLTLPQLALA) are cleaved as a signal peptide.

Belongs to the FlgI family. In terms of assembly, the basal body constitutes a major portion of the flagellar organelle and consists of four rings (L,P,S, and M) mounted on a central rod.

The protein resides in the periplasm. It is found in the bacterial flagellum basal body. In terms of biological role, assembles around the rod to form the L-ring and probably protects the motor/basal body from shearing forces during rotation. The polypeptide is Flagellar P-ring protein (Geobacter metallireducens (strain ATCC 53774 / DSM 7210 / GS-15)).